Here is a 218-residue protein sequence, read N- to C-terminus: MPGVVFDLDGTLVHSAPDIHAAVNKALAEEGGAPFTLAEITGFIGNGVPVLIQRVLAARGEAPDAHRQAELQGRFMAHYEADPATLTSVYPGAEAAIRHLRAEGWRIGLCTNKPVGASRQILSLFGLLELFDAIIGGESLPQRKPDPAPLRATAAALNEEVVLYVGDSEVDAATAEAAGLRFALFTEGYRHAPVHELPHHGLFSHHDELQDLLRRLLA.

Asp-7 serves as the catalytic Nucleophile. The Mg(2+) site is built by Asp-7, Asp-9, and Asp-167.

Belongs to the HAD-like hydrolase superfamily. CbbY/CbbZ/Gph/YieH family. Mg(2+) is required as a cofactor.

The catalysed reaction is 2-phosphoglycolate + H2O = glycolate + phosphate. It participates in organic acid metabolism; glycolate biosynthesis; glycolate from 2-phosphoglycolate: step 1/1. Its function is as follows. Specifically catalyzes the dephosphorylation of 2-phosphoglycolate. Is involved in the dissimilation of the intracellular 2-phosphoglycolate formed during the DNA repair of 3'-phosphoglycolate ends, a major class of DNA lesions induced by oxidative stress. The sequence is that of Phosphoglycolate phosphatase from Cereibacter sphaeroides (Rhodobacter sphaeroides).